An 873-amino-acid polypeptide reads, in one-letter code: Valine--tRNA ligase (873 aa).

Residues 43–53 (PNVTGVLHMGH) carry the 'HIGH' region motif. The 'KMSKS' region signature appears at 532 to 536 (KMSKS). An ATP-binding site is contributed by K535. A coiled-coil region spans residues 802–873 (LGNLINVEEE…IEESIAALTK (72 aa)).

It belongs to the class-I aminoacyl-tRNA synthetase family. ValS type 1 subfamily. As to quaternary structure, monomer.

It localises to the cytoplasm. It catalyses the reaction tRNA(Val) + L-valine + ATP = L-valyl-tRNA(Val) + AMP + diphosphate. In terms of biological role, catalyzes the attachment of valine to tRNA(Val). As ValRS can inadvertently accommodate and process structurally similar amino acids such as threonine, to avoid such errors, it has a 'posttransfer' editing activity that hydrolyzes mischarged Thr-tRNA(Val) in a tRNA-dependent manner. The chain is Valine--tRNA ligase from Parabacteroides distasonis (strain ATCC 8503 / DSM 20701 / CIP 104284 / JCM 5825 / NCTC 11152).